Reading from the N-terminus, the 200-residue chain is Protein GrpE (200 aa).

The segment covering 1 to 11 has biased composition (basic and acidic residues); the sequence is MTDNDGQKDFS. The interval 1 to 43 is disordered; that stretch reads MTDNDGQKDFSEAAAENAGSKPGEPRVSKPYIMPDDPEETPSE.

It belongs to the GrpE family. Homodimer.

The protein localises to the cytoplasm. Participates actively in the response to hyperosmotic and heat shock by preventing the aggregation of stress-denatured proteins, in association with DnaK and GrpE. It is the nucleotide exchange factor for DnaK and may function as a thermosensor. Unfolded proteins bind initially to DnaJ; upon interaction with the DnaJ-bound protein, DnaK hydrolyzes its bound ATP, resulting in the formation of a stable complex. GrpE releases ADP from DnaK; ATP binding to DnaK triggers the release of the substrate protein, thus completing the reaction cycle. Several rounds of ATP-dependent interactions between DnaJ, DnaK and GrpE are required for fully efficient folding. In Afipia carboxidovorans (strain ATCC 49405 / DSM 1227 / KCTC 32145 / OM5) (Oligotropha carboxidovorans), this protein is Protein GrpE.